Here is a 246-residue protein sequence, read N- to C-terminus: Zorya protein ZorB (246 aa).

The helical transmembrane segment at 20-40 (FWISYADLMTAMMVLFLVVMV) threads the bilayer. The OmpA-like domain maps to 86–218 (CHDNRISFGE…RVELRMQFFG (133 aa)).

It belongs to the MotB family.

The protein resides in the cell inner membrane. Functionally, component of antiviral defense system Zorya type I, composed of ZorA, ZorB, ZorC and ZorD. Expression of Zorya type I in E.coli (strain MG1655) confers 10,000-fold resistance to phage SECphi27, 100-fold resistance to lambda, and 10-fold resistance to T7. While most T7 infected Zorya-containing cells undergo abortive infection, a minority produce viable phage progeny. These eventually accumulate to a high multiplicity of infection, leading to culture collapse by 2 hours after initial infection. ZorA and ZorB probably assemble in the cell inner membrane and exert their effect there. This chain is Zorya protein ZorB, found in Escherichia coli O139:H28 (strain E24377A / ETEC).